The chain runs to 419 residues: UDP-N-acetylglucosamine 1-carboxyvinyltransferase (419 aa).

Residue K22 to N23 participates in phosphoenolpyruvate binding. A UDP-N-acetyl-alpha-D-glucosamine-binding site is contributed by R93. C117 serves as the catalytic Proton donor. C117 carries the post-translational modification 2-(S-cysteinyl)pyruvic acid O-phosphothioketal. 2 residues coordinate UDP-N-acetyl-alpha-D-glucosamine: D307 and I329.

It belongs to the EPSP synthase family. MurA subfamily.

The protein localises to the cytoplasm. The catalysed reaction is phosphoenolpyruvate + UDP-N-acetyl-alpha-D-glucosamine = UDP-N-acetyl-3-O-(1-carboxyvinyl)-alpha-D-glucosamine + phosphate. The protein operates within cell wall biogenesis; peptidoglycan biosynthesis. Cell wall formation. Adds enolpyruvyl to UDP-N-acetylglucosamine. This is UDP-N-acetylglucosamine 1-carboxyvinyltransferase from Shewanella sediminis (strain HAW-EB3).